Here is a 457-residue protein sequence, read N- to C-terminus: Tubulin beta chain (457 aa).

The GTP site is built by Gln-11, Glu-69, Ser-138, Gly-142, Thr-143, Gly-144, Asn-204, and Asn-226. Residue Glu-69 participates in Mg(2+) binding. Phosphoserine is present on residues Ser-278 and Ser-280. The disordered stretch occupies residues 423-457 (QQYQEATVEDDEEVDENGDFGAPQNQDEPITENFE). The span at 429–440 (TVEDDEEVDENG) shows a compositional bias: acidic residues.

It belongs to the tubulin family. In terms of assembly, dimer of alpha and beta chains. A typical microtubule is a hollow water-filled tube with an outer diameter of 25 nm and an inner diameter of 15 nM. Alpha-beta heterodimers associate head-to-tail to form protofilaments running lengthwise along the microtubule wall with the beta-tubulin subunit facing the microtubule plus end conferring a structural polarity. Microtubules usually have 13 protofilaments but different protofilament numbers can be found in some organisms and specialized cells. Requires Mg(2+) as cofactor.

Its subcellular location is the cytoplasm. It localises to the cytoskeleton. In terms of biological role, tubulin is the major constituent of microtubules, a cylinder consisting of laterally associated linear protofilaments composed of alpha- and beta-tubulin heterodimers. Microtubules grow by the addition of GTP-tubulin dimers to the microtubule end, where a stabilizing cap forms. Below the cap, tubulin dimers are in GDP-bound state, owing to GTPase activity of alpha-tubulin. In Saccharomyces cerevisiae (strain ATCC 204508 / S288c) (Baker's yeast), this protein is Tubulin beta chain (TUB2).